The sequence spans 214 residues: Probable chemoreceptor glutamine deamidase CheD (214 aa).

The protein belongs to the CheD family.

It carries out the reaction L-glutaminyl-[protein] + H2O = L-glutamyl-[protein] + NH4(+). Its function is as follows. Probably deamidates glutamine residues to glutamate on methyl-accepting chemotaxis receptors (MCPs), playing an important role in chemotaxis. In Vibrio vulnificus (strain CMCP6), this protein is Probable chemoreceptor glutamine deamidase CheD.